The chain runs to 315 residues: Methionyl-tRNA formyltransferase (315 aa).

107 to 110 (SLLP) lines the (6S)-5,6,7,8-tetrahydrofolate pocket.

It belongs to the Fmt family.

It catalyses the reaction L-methionyl-tRNA(fMet) + (6R)-10-formyltetrahydrofolate = N-formyl-L-methionyl-tRNA(fMet) + (6S)-5,6,7,8-tetrahydrofolate + H(+). Functionally, attaches a formyl group to the free amino group of methionyl-tRNA(fMet). The formyl group appears to play a dual role in the initiator identity of N-formylmethionyl-tRNA by promoting its recognition by IF2 and preventing the misappropriation of this tRNA by the elongation apparatus. This chain is Methionyl-tRNA formyltransferase, found in Borrelia garinii subsp. bavariensis (strain ATCC BAA-2496 / DSM 23469 / PBi) (Borreliella bavariensis).